A 145-amino-acid chain; its full sequence is Maximins 3/H3 type 1 (145 aa).

Positions M1 to A18 are cleaved as a signal peptide. 2 propeptides span residues R19 to I43 and R74 to R124. I144 bears the Isoleucine amide mark.

Belongs to the bombinin family. Expressed by the skin glands.

The protein localises to the secreted. In terms of biological role, maximin-3 shows antibacterial activity against both Gram-positive and Gram-negative bacteria. It also shows antimicrobial activity against the fungus C.albicans, but not against A.flavus nor P.uticale. It has little hemolytic activity. It possess a significant cytotoxicity against tumor cell lines. It possess a significant anti-HIV activity. It shows high spermicidal activity. Maximin-H3 shows antibacterial activity against both Gram-positive and Gram-negative bacteria. It also shows antimicrobial activity against the fungus C.albicans. Shows strong hemolytic activity. The protein is Maximins 3/H3 type 1 of Bombina maxima (Giant fire-bellied toad).